Here is a 141-residue protein sequence, read N- to C-terminus: Large ribosomal subunit protein uL11 (141 aa).

This sequence belongs to the universal ribosomal protein uL11 family. In terms of assembly, part of the ribosomal stalk of the 50S ribosomal subunit. Interacts with L10 and the large rRNA to form the base of the stalk. L10 forms an elongated spine to which L12 dimers bind in a sequential fashion forming a multimeric L10(L12)X complex. Post-translationally, one or more lysine residues are methylated.

Its function is as follows. Forms part of the ribosomal stalk which helps the ribosome interact with GTP-bound translation factors. The chain is Large ribosomal subunit protein uL11 from Roseiflexus sp. (strain RS-1).